A 248-amino-acid chain; its full sequence is Probable phosphatase VF_A0065 (248 aa).

9 residues coordinate Zn(2+): His-8, His-10, His-16, His-41, Glu-74, His-102, His-132, Asp-194, and His-196.

The protein belongs to the PHP family. Requires Zn(2+) as cofactor.

The sequence is that of Probable phosphatase VF_A0065 from Aliivibrio fischeri (strain ATCC 700601 / ES114) (Vibrio fischeri).